A 95-amino-acid chain; its full sequence is Protein TusB (95 aa).

It belongs to the DsrH/TusB family. Heterohexamer, formed by a dimer of trimers. The hexameric TusBCD complex contains 2 copies each of TusB, TusC and TusD. The TusBCD complex interacts with TusE.

It localises to the cytoplasm. Part of a sulfur-relay system required for 2-thiolation of 5-methylaminomethyl-2-thiouridine (mnm(5)s(2)U) at tRNA wobble positions. This Enterobacter sp. (strain 638) protein is Protein TusB.